A 940-amino-acid polypeptide reads, in one-letter code: Mating-type protein A-alpha Z4 (940 aa).

The segment at residues 110–182 (GAELSATPLP…AARARMGWGD (73 aa)) is a DNA-binding region (homeobox; TALE-type). 4 disordered regions span residues 333-618 (KQRQ…TGDP), 633-762 (PRDL…GLRP), 832-863 (GQKA…SSLV), and 877-912 (EAPK…DTVR). Residues 337–360 (ARREQRRAQKDRMDAQRRAEDRKC) show a composition bias toward basic and acidic residues. Acidic residues-rich tracts occupy residues 376–400 (ESDE…DGED) and 427–469 (ATED…EEEE). 3 stretches are compositionally biased toward low complexity: residues 516 to 531 (PSSR…SPSP), 582 to 611 (VRSR…PSGG), and 657 to 693 (SRSL…SDAT). Residues 694–703 (DITEPDEATT) are compositionally biased toward acidic residues. Over residues 704 to 724 (ADETTTQSTSASSSRDTTSQQ) the composition is skewed to low complexity. Over residues 877 to 896 (EAPKPAKAPKNDRRYLERRE) the composition is skewed to basic and acidic residues.

Belongs to the TALE/M-ATYP homeobox family.

The protein localises to the nucleus. In terms of biological role, specifies A-alpha-4 mating-type. May regulate the expression of genes specific to the homokaryotic cell type. The polypeptide is Mating-type protein A-alpha Z4 (Schizophyllum commune (Split gill fungus)).